Here is a 323-residue protein sequence, read N- to C-terminus: Deaminated glutathione amidase (323 aa).

The transit peptide at 1–33 directs the protein to the mitochondrion; that stretch reads MLGFITRPPHQLLCTGYRLLRTPVLCTQPRPRT. A CN hydrolase domain is found at 42 to 294; that stretch reads LPLVAVCQVT…PGLCLARIDL (253 aa). The active-site Proton acceptor is the Glu82. The active-site Proton donor is the Lys157. Catalysis depends on Cys199, which acts as the Nucleophile.

The protein belongs to the carbon-nitrogen hydrolase superfamily. NIT1/NIT2 family. As to expression, expressed in most tissues with higher expression in adult liver and kidney as well as in fetal adrenal gland and skeletal muscle.

The protein resides in the mitochondrion. Its subcellular location is the cytoplasm. The catalysed reaction is N-(4-oxoglutaryl)-L-cysteinylglycine + H2O = L-cysteinylglycine + 2-oxoglutarate. It carries out the reaction N-(4-carboxy-4-oxobutanoyl)-L-ethylglycylglycine + H2O = N-(2-aminobutanoyl)glycine + 2-oxoglutarate. In terms of biological role, catalyzes the hydrolysis of the amide bond in N-(4-oxoglutarate)-L-cysteinylglycine (deaminated glutathione), a metabolite repair reaction to dispose of the harmful deaminated glutathione. Possesses amidase activity toward deaminated ophthalmate in vitro. Plays a role in cell growth and apoptosis: loss of expression promotes cell growth, resistance to DNA damage stress and increased incidence to NMBA-induced tumors. Has tumor suppressor properties that enhances the apoptotic responsiveness in cancer cells; this effect is additive to the tumor suppressor activity of FHIT. It is also a negative regulator of primary T-cells. In Mus musculus (Mouse), this protein is Deaminated glutathione amidase.